The sequence spans 980 residues: Ankycorbin (980 aa).

M1 is modified (N-acetylmethionine). A Phosphoserine modification is found at S11. 7 ANK repeats span residues 18–51, 52–81, 85–114, 118–147, 151–180, 184–213, and 217–247; these read KNDD…KHDS, EGKT…DVTA, TGHS…PAES, SGKT…PINL, DGNI…DVNS, SGRT…DLNL, and LGYN…DADL. A compositionally biased stretch (basic and acidic residues) spans 247–259; sequence LKTPTKPKQHDQV. A disordered region spans residues 247–301; that stretch reads LKTPTKPKQHDQVSKISSERSGTPKKRKAPPPPISPTQLSDVSSPRSITSTPLSG. T249 carries the post-translational modification Phosphothreonine. Residues 270–276 carry the Nuclear localization signal motif; sequence PKKRKAP. S281, S286, and S293 each carry phosphoserine. The span at 282-299 shows a compositional bias: polar residues; sequence PTQLSDVSSPRSITSTPL. Phosphothreonine occurs at positions 295 and 297. S300, S304, S318, S327, S329, S340, S341, S350, S358, S419, S512, S515, S667, and S915 each carry phosphoserine. Residues 349-374 adopt a coiled-coil conformation; it reads LSLLQAKVASLTLHNKELQDKLQAKS. Residues 387 to 423 are disordered; that stretch reads YHSTQTDLGPSLGKPGETSPPDSKSSPSVLIHSLGKS. Positions 425–947 form a coiled coil; sequence TDNDVRIQQL…QHQEVISVYR (523 aa).

In terms of assembly, interacts with PALLD. Associates with actin. However, does not bind F-actin directly. Highly expressed in placenta, muscle, kidney and testis. Moderately expressed in heart, brain, lung, liver and intestine. Isoform 2 is widely expressed and expressed in fetal and adult testes, and spermatozoa.

It is found in the cytoplasm. It localises to the cytoskeleton. The protein localises to the stress fiber. Its subcellular location is the cell cortex. The protein resides in the cell junction. It is found in the nucleus. Plays a role in actin regulation at the ectoplasmic specialization, a type of cell junction specific to testis. Important for establishment of sperm polarity and normal spermatid adhesion. May also promote integrity of Sertoli cell tight junctions at the blood-testis barrier. The polypeptide is Ankycorbin (RAI14) (Homo sapiens (Human)).